The chain runs to 349 residues: Probable G-protein coupled receptor 21 (349 aa).

Over 1 to 32 (MNSTLDGNQSSHPFCLLAFGYLETVNFCLLEV) the chain is Extracellular. Asn2 and Asn8 each carry an N-linked (GlcNAc...) asparagine glycan. A helical transmembrane segment spans residues 33–53 (LIIVFLTVLIISGNIIVIFVF). Residues 54–75 (HCAPLLNHHTTSYFIQTMAYAD) are Cytoplasmic-facing. A helical transmembrane segment spans residues 76–96 (LFVGVSCVVPSLSLLHHPLPV). Over 97–104 (EESLTCQI) the chain is Extracellular. The chain crosses the membrane as a helical span at residues 105-125 (FGFVVSVLKSVSMASLACISI). The Cytoplasmic portion of the chain corresponds to 126 to 147 (DRYIAITKPLTYNTLVTPWRLR). Residues 148–168 (LCIFLIWLYSTLVFLPSFFHW) traverse the membrane as a helical segment. Residues 169-191 (GKPGYHGDVFQWCAESWHTDSYF) are Extracellular-facing. Residues 192–212 (TLFIVMMLYAPAALIVCFTYF) traverse the membrane as a helical segment. The Cytoplasmic portion of the chain corresponds to 213–252 (NIFRICQQHTKDISERQARFSSQSGETGEVQACPDKRYAM). The helical transmembrane segment at 253–273 (VLFRITSVFYILWLPYIIYFL) threads the bilayer. Residues 274–283 (LESSTGHSNR) are Extracellular-facing. Residues 284–304 (FASFLTTWLAISNSFCNCVIY) traverse the membrane as a helical segment. The Cytoplasmic segment spans residues 305 to 349 (SLSNSVFQRGLKRLSGAMCTSCASQTTANDPYTVRSKGPLNGCHI).

Belongs to the G-protein coupled receptor 1 family. As to expression, not detected in the brain regions thalamus, putamen, caudate, frontal cortex, pons, hypothalamus, hippocampus.

It is found in the cell membrane. Its function is as follows. Orphan receptor. The polypeptide is Probable G-protein coupled receptor 21 (GPR21) (Homo sapiens (Human)).